A 179-amino-acid chain; its full sequence is Adenine phosphoribosyltransferase (179 aa).

Belongs to the purine/pyrimidine phosphoribosyltransferase family. As to quaternary structure, homodimer.

It localises to the cytoplasm. The catalysed reaction is AMP + diphosphate = 5-phospho-alpha-D-ribose 1-diphosphate + adenine. It functions in the pathway purine metabolism; AMP biosynthesis via salvage pathway; AMP from adenine: step 1/1. In terms of biological role, catalyzes a salvage reaction resulting in the formation of AMP, that is energically less costly than de novo synthesis. The sequence is that of Adenine phosphoribosyltransferase from Nitrobacter winogradskyi (strain ATCC 25391 / DSM 10237 / CIP 104748 / NCIMB 11846 / Nb-255).